The following is a 492-amino-acid chain: Fascin-2 (492 aa).

The protein belongs to the fascin family. Expressed in the inner ear. Abundant in the utricle.

The protein resides in the cytoplasm. The protein localises to the cytoskeleton. It is found in the cell projection. Its subcellular location is the stereocilium. In terms of biological role, acts as an actin bundling protein. May play a pivotal role in photoreceptor cell-specific events, such as disk morphogenesis. Important for maintaining functional hair-cell bundles in the inner ear. May stiffen the longer stereocilia of hair-cell bundles in the inner ear enabling better force transmission to tip links. This chain is Fascin-2 (Fscn2), found in Mus musculus (Mouse).